Here is a 101-residue protein sequence, read N- to C-terminus: Urease subunit beta (101 aa).

This sequence belongs to the urease beta subunit family. Heterotrimer of UreA (gamma), UreB (beta) and UreC (alpha) subunits. Three heterotrimers associate to form the active enzyme.

It localises to the cytoplasm. The enzyme catalyses urea + 2 H2O + H(+) = hydrogencarbonate + 2 NH4(+). Its pathway is nitrogen metabolism; urea degradation; CO(2) and NH(3) from urea (urease route): step 1/1. The polypeptide is Urease subunit beta (Mesorhizobium japonicum (strain LMG 29417 / CECT 9101 / MAFF 303099) (Mesorhizobium loti (strain MAFF 303099))).